The primary structure comprises 500 residues: L-arabinose isomerase (500 aa).

Residues Glu-306, Glu-333, His-350, and His-450 each contribute to the Mn(2+) site.

It belongs to the arabinose isomerase family. In terms of assembly, homohexamer. Requires Mn(2+) as cofactor.

It carries out the reaction beta-L-arabinopyranose = L-ribulose. Its pathway is carbohydrate degradation; L-arabinose degradation via L-ribulose; D-xylulose 5-phosphate from L-arabinose (bacterial route): step 1/3. Catalyzes the conversion of L-arabinose to L-ribulose. In Salmonella arizonae (strain ATCC BAA-731 / CDC346-86 / RSK2980), this protein is L-arabinose isomerase.